A 67-amino-acid chain; its full sequence is Alpha-toxin Tf3 (67 aa).

The region spanning 2-63 is the LCN-type CS-alpha/beta domain; that stretch reads KDGYPVEGDN…EPTKTNGRCK (62 aa). Intrachain disulfides connect Cys-12–Cys-62, Cys-16–Cys-38, Cys-24–Cys-45, and Cys-28–Cys-47. Residue Pro-64 is modified to Proline amide.

The protein belongs to the long (4 C-C) scorpion toxin superfamily. Sodium channel inhibitor family. Alpha subfamily. As to expression, expressed by the venom gland.

It is found in the secreted. Its function is as follows. Alpha toxins bind voltage-independently at site-3 of sodium channels (Nav) and inhibit the inactivation of the activated channels, thereby blocking neuronal transmission. This is Alpha-toxin Tf3 from Tityus fasciolatus (Central Brazilian scorpion).